The primary structure comprises 101 residues: Protein mes1 (101 aa).

A compositionally biased stretch (basic and acidic residues) spans 1–19; that stretch reads MVNTDNKENEPPNMEKAHM. The interval 1-101 is disordered; the sequence is MVNTDNKENE…RSPNPLLSMR (101 aa).

Interacts with slp1.

Its subcellular location is the cytoplasm. The protein resides in the nucleus. Specifically required for meiosis II (MII). Binds to slp1, an activator of the anapahase promoting complex/cyclcosome (APC/C), and counteracts its function in promoting proteolysis of cdc13. By suppressing the degradation of cdc13 at anaphase I this protein may help maintain a sufficient level of cdc2 kinase activity to complete MII. The protein is Protein mes1 (mes1) of Schizosaccharomyces pombe (strain 972 / ATCC 24843) (Fission yeast).